Reading from the N-terminus, the 465-residue chain is ATP synthase subunit beta (465 aa).

148–155 (GGAGVGKT) serves as a coordination point for ATP.

This sequence belongs to the ATPase alpha/beta chains family. In terms of assembly, F-type ATPases have 2 components, CF(1) - the catalytic core - and CF(0) - the membrane proton channel. CF(1) has five subunits: alpha(3), beta(3), gamma(1), delta(1), epsilon(1). CF(0) has three main subunits: a(1), b(2) and c(9-12). The alpha and beta chains form an alternating ring which encloses part of the gamma chain. CF(1) is attached to CF(0) by a central stalk formed by the gamma and epsilon chains, while a peripheral stalk is formed by the delta and b chains.

It localises to the cell inner membrane. The enzyme catalyses ATP + H2O + 4 H(+)(in) = ADP + phosphate + 5 H(+)(out). Functionally, produces ATP from ADP in the presence of a proton gradient across the membrane. The catalytic sites are hosted primarily by the beta subunits. In Neisseria meningitidis serogroup A / serotype 4A (strain DSM 15465 / Z2491), this protein is ATP synthase subunit beta.